The sequence spans 478 residues: Phosphomannomutase (478 aa).

The helical transmembrane segment at 30–46 threads the bilayer; sequence FTPEVCARFTISFLTVM. S111 (phosphoserine intermediate) is an active-site residue. Residues S111, D245, D247, and D249 each contribute to the Mg(2+) site. Residues 265-284 form a helical membrane-spanning segment; that stretch reads ILGLLCSLELAADAVAIPVS.

The protein belongs to the phosphohexose mutase family. Requires Mg(2+) as cofactor.

The protein localises to the cell membrane. It carries out the reaction alpha-D-mannose 1-phosphate = D-mannose 6-phosphate. It functions in the pathway nucleotide-sugar biosynthesis; GDP-alpha-D-mannose biosynthesis; alpha-D-mannose 1-phosphate from D-fructose 6-phosphate: step 2/2. Its pathway is bacterial outer membrane biogenesis; LPS O-antigen biosynthesis. In terms of biological role, involved in GDP-mannose biosynthesis which serves as the activated sugar nucleotide precursor for mannose residues in cell surface polysaccharides. This enzyme participates in synthesis of the LPS group C2 O antigen. This Salmonella muenchen protein is Phosphomannomutase (manB).